An 837-amino-acid polypeptide reads, in one-letter code: Translation initiation factor IF-2 (837 aa).

The span at 97–139 (AEEIEAEQRRELEEQRAAEEAARLKAEQEARERAEEEARRQAE) shows a compositional bias: basic and acidic residues. The segment at 97-253 (AEEIEAEQRR…QHGFQSPTGP (157 aa)) is disordered. Low complexity predominate over residues 140–175 (AAKAQTAETAAPAAAESASSAEPAQVVAAVEAAAPA). Residues 176 to 197 (PERKKEEPRRVEKPRSDDDERR) are compositionally biased toward basic and acidic residues. The span at 198-208 (DRKHAQHRPSL) shows a compositional bias: basic residues. Basic and acidic residues predominate over residues 219–229 (RSGEDEADGFR). Residues 230–244 (RGGRGGKSKLKKRNQ) show a composition bias toward basic residues. Positions 337–504 (ARAPVVTVMG…AVLLQAEILE (168 aa)) constitute a tr-type G domain. The G1 stretch occupies residues 346–353 (GHVDHGKT). 346–353 (GHVDHGKT) lines the GTP pocket. A G2 region spans residues 371-375 (GITQH). The tract at residues 392-395 (DTPG) is G3. GTP contacts are provided by residues 392–396 (DTPGH) and 446–449 (NKID). The tract at residues 446 to 449 (NKID) is G4. The tract at residues 482–484 (SAK) is G5.

The protein belongs to the TRAFAC class translation factor GTPase superfamily. Classic translation factor GTPase family. IF-2 subfamily.

The protein resides in the cytoplasm. Functionally, one of the essential components for the initiation of protein synthesis. Protects formylmethionyl-tRNA from spontaneous hydrolysis and promotes its binding to the 30S ribosomal subunits. Also involved in the hydrolysis of GTP during the formation of the 70S ribosomal complex. The sequence is that of Translation initiation factor IF-2 from Stutzerimonas stutzeri (strain A1501) (Pseudomonas stutzeri).